Here is a 155-residue protein sequence, read N- to C-terminus: Large ribosomal subunit protein uL22 (155 aa).

It belongs to the universal ribosomal protein uL22 family. As to quaternary structure, part of the 50S ribosomal subunit. Contacts the macrolide antibiotic tylosin in the polypeptide exit tunnel.

Functionally, this protein binds specifically to 23S rRNA. It makes multiple contacts with different domains of the 23S rRNA in the assembled 50S subunit and ribosome. Contacts all 6 domains of the 23S rRNA, helping stabilize their relative orientation. An extended beta-hairpin in the C-terminus forms part of the polypeptide exit tunnel, in which it helps forms a bend with protein L4, while most of the rest of the protein is located at the polypeptide exit tunnel on the outside of the subunit. The chain is Large ribosomal subunit protein uL22 from Haloarcula marismortui (strain ATCC 43049 / DSM 3752 / JCM 8966 / VKM B-1809) (Halobacterium marismortui).